Consider the following 615-residue polypeptide: Elongation factor 4 (615 aa).

Residues 14 to 196 (AMIRNFCIIA…EIVRQVPAPV (183 aa)) form the tr-type G domain. GTP-binding positions include 26 to 31 (DHGKST) and 143 to 146 (NKID).

The protein belongs to the TRAFAC class translation factor GTPase superfamily. Classic translation factor GTPase family. LepA subfamily.

It localises to the cell membrane. The catalysed reaction is GTP + H2O = GDP + phosphate + H(+). Its function is as follows. Required for accurate and efficient protein synthesis under certain stress conditions. May act as a fidelity factor of the translation reaction, by catalyzing a one-codon backward translocation of tRNAs on improperly translocated ribosomes. Back-translocation proceeds from a post-translocation (POST) complex to a pre-translocation (PRE) complex, thus giving elongation factor G a second chance to translocate the tRNAs correctly. Binds to ribosomes in a GTP-dependent manner. The polypeptide is Elongation factor 4 (Frankia alni (strain DSM 45986 / CECT 9034 / ACN14a)).